The sequence spans 20 residues: N-acetyl-D-galactosamine-binding lectin subunit B (20 aa).

As to quaternary structure, disulfide-linked heterodimer of A and B chains.

Functionally, gal / GalNAc-specific lectin. Agglutinates both native and trypsin-treated rabbit erythrocytes but not human erythrocytes irrespective of blood group type. The chain is N-acetyl-D-galactosamine-binding lectin subunit B from Iris hollandica (Dutch iris).